The chain runs to 61 residues: Potassium channel toxin alpha-KTx 3.18 (61 aa).

A signal peptide spans 1-23 (MKMFFTVLVTLFVCSMIIGICEG). Intrachain disulfides connect C30–C50, C36–C55, and C40–C57. Position 60 is a lysine amide (K60).

In terms of tissue distribution, expressed by the venom gland.

It localises to the secreted. Its function is as follows. Inhibits voltage-gated potassium channel rKv1.1/KCNA1 at nanomolar ranges (IC(50)=90 +-2 nM, reduction of current by 30% at 50 nM or toxin). This chain is Potassium channel toxin alpha-KTx 3.18, found in Mesobuthus eupeus (Lesser Asian scorpion).